The chain runs to 535 residues: Berberine bridge enzyme-like 27 (535 aa).

An N-terminal signal peptide occupies residues 1 to 22 (MEILRFLLSLFIYFLLLNLSLS). 2 N-linked (GlcNAc...) asparagine glycosylation sites follow: Asn18 and Asn66. A disulfide bridge links Cys40 with Cys100. One can recognise an FAD-binding PCMH-type domain in the interval 78–253 (ETPKPVSIIT…LSWKIRLLDV (176 aa)). His115 bears the Pros-8alpha-FAD histidine mark. Asn146, Asn215, and Asn439 each carry an N-linked (GlcNAc...) asparagine glycan.

This sequence belongs to the oxygen-dependent FAD-linked oxidoreductase family. FAD serves as cofactor. Accumulates in cell walls of etiolated hypocotyls.

Its subcellular location is the secreted. The protein resides in the cell wall. The polypeptide is Berberine bridge enzyme-like 27 (Arabidopsis thaliana (Mouse-ear cress)).